Reading from the N-terminus, the 364-residue chain is 3-isopropylmalate dehydrogenase (364 aa).

An NAD(+)-binding site is contributed by 78–91 (GKKWDYLSIDKRPE). Residues Arg99, Arg109, Arg138, and Asp227 each coordinate substrate. Residues Asp227, Asp251, and Asp255 each contribute to the Mg(2+) site. 285 to 297 (GSAPDIAGKNIAN) serves as a coordination point for NAD(+).

This sequence belongs to the isocitrate and isopropylmalate dehydrogenases family. LeuB type 1 subfamily. Homodimer. The cofactor is Mg(2+). Requires Mn(2+) as cofactor.

The protein resides in the cytoplasm. The catalysed reaction is (2R,3S)-3-isopropylmalate + NAD(+) = 4-methyl-2-oxopentanoate + CO2 + NADH. It functions in the pathway amino-acid biosynthesis; L-leucine biosynthesis; L-leucine from 3-methyl-2-oxobutanoate: step 3/4. Functionally, catalyzes the oxidation of 3-carboxy-2-hydroxy-4-methylpentanoate (3-isopropylmalate) to 3-carboxy-4-methyl-2-oxopentanoate. The product decarboxylates to 4-methyl-2 oxopentanoate. This Buchnera aphidicola subsp. Uroleucon erigeronensis protein is 3-isopropylmalate dehydrogenase.